We begin with the raw amino-acid sequence, 281 residues long: Voltage-dependent L-type calcium channel subunit alpha-1S (281 aa).

One copy of the III repeat lies at 1–8; that stretch reads VGFVIVTF. The segment at 1–17 is dihydropyridine binding; sequence VGFVIVTFQEQGESEYK. The IV repeat unit spans residues 45–281; sequence NPYQYQIWYV…TCGTGFAYFY (237 aa). A helical transmembrane segment spans residues 59–80; that stretch reads YFEYLMFFLIMLNTICLGMQHY. An N-linked (GlcNAc...) asparagine glycan is attached at Asn81. The helical transmembrane segment at 89 to 110 threads the bilayer; the sequence is VSDILNVAFTVLFTLEMILKLM. A helical transmembrane segment spans residues 121-140; the sequence is PWNVFDFLIVIGSIIDVILS. A helical membrane pass occupies residues 153 to 171; sequence ITFFRLFRVMRLVKLLSRG. Residues 190 to 210 form a helical membrane-spanning segment; it reads YVALLIVMLFFIYAVIGMQMF. Residues 233 to 251 constitute an intramembrane region (pore-forming); sequence AVLLLFRCATGEAWQEILL. A Selectivity filter of repeat IV motif is present at residues 242 to 245; the sequence is TGEA. Residues 258–281 form a dihydropyridine binding region; it reads RCDPESDYAEGEEYTCGTGFAYFY. Cys259 and Cys273 form a disulfide bridge. A phenylalkylamine binding region spans residues 270 to 281; the sequence is EYTCGTGFAYFY.

The protein belongs to the calcium channel alpha-1 subunit (TC 1.A.1.11) family. CACNA1S subfamily. Component of a calcium channel complex consisting of a pore-forming alpha subunit (CACNA1S) and the ancillary subunits CACNB1 or CACNB2, CACNG1 and CACNA2D1. The channel complex contains alpha, beta, gamma and delta subunits in a 1:1:1:1 ratio, i.e. it contains either CACNB1 or CACNB2. CACNA1S channel activity is modulated by the auxiliary subunits (CACNB1 or CACNB2, CACNG1 and CACNA2D1). Interacts with DYSF and JSRP1. Interacts with RYR1. Interacts with CALM. In terms of processing, the alpha-1S subunit is found in two isoforms in the skeletal muscle: a minor form of 212 kDa containing the complete amino acid sequence, and a major form of 190 kDa derived from the full-length form by post-translational proteolysis close to Phe-1690. Both the minor and major forms are phosphorylated in vitro by PKA. Phosphorylation by PKA activates the calcium channel.

It localises to the cell membrane. It is found in the sarcolemma. Its subcellular location is the T-tubule. It carries out the reaction Ca(2+)(in) = Ca(2+)(out). Channel activity is blocked by dihydropyridines (DHP), phenylalkylamines, and by benzothiazepines. Pore-forming, alpha-1S subunit of the voltage-gated calcium channel that gives rise to L-type calcium currents in skeletal muscle. Calcium channels containing the alpha-1S subunit play an important role in excitation-contraction coupling in skeletal muscle via their interaction with RYR1, which triggers Ca(2+) release from the sarcplasmic reticulum and ultimately results in muscle contraction. Long-lasting (L-type) calcium channels belong to the 'high-voltage activated' (HVA) group. The chain is Voltage-dependent L-type calcium channel subunit alpha-1S (CACNA1S) from Gallus gallus (Chicken).